The chain runs to 120 residues: Large ribosomal subunit protein uL14 (120 aa).

The protein belongs to the universal ribosomal protein uL14 family. As to quaternary structure, part of the 50S ribosomal subunit. Forms a cluster with proteins L3 and L19. In the 70S ribosome, L14 and L19 interact and together make contacts with the 16S rRNA in bridges B5 and B8.

In terms of biological role, binds to 23S rRNA. Forms part of two intersubunit bridges in the 70S ribosome. The sequence is that of Large ribosomal subunit protein uL14 from Phytoplasma australiense.